The primary structure comprises 194 residues: dITP/XTP pyrophosphatase (194 aa).

Position 9–14 (9–14 (THNPGK)) interacts with substrate. Mg(2+)-binding residues include aspartate 40 and aspartate 69. The Proton acceptor role is filled by aspartate 69. Residues serine 70, 152-155 (FGYD), lysine 175, and 180-181 (HR) contribute to the substrate site.

Belongs to the HAM1 NTPase family. In terms of assembly, homodimer. Requires Mg(2+) as cofactor.

It carries out the reaction XTP + H2O = XMP + diphosphate + H(+). It catalyses the reaction dITP + H2O = dIMP + diphosphate + H(+). The enzyme catalyses ITP + H2O = IMP + diphosphate + H(+). Pyrophosphatase that catalyzes the hydrolysis of nucleoside triphosphates to their monophosphate derivatives, with a high preference for the non-canonical purine nucleotides XTP (xanthosine triphosphate), dITP (deoxyinosine triphosphate) and ITP. Seems to function as a house-cleaning enzyme that removes non-canonical purine nucleotides from the nucleotide pool, thus preventing their incorporation into DNA/RNA and avoiding chromosomal lesions. In Caulobacter vibrioides (strain ATCC 19089 / CIP 103742 / CB 15) (Caulobacter crescentus), this protein is dITP/XTP pyrophosphatase.